Consider the following 511-residue polypeptide: Protein phosphatase 2C 7 (511 aa).

An N-terminal signal peptide occupies residues 1 to 19; sequence MEEISPAVALTLGLANTMC. In terms of domain architecture, PPM-type phosphatase spans 188 to 501; that stretch reads LWGTISICGG…DNISIIVIDL (314 aa). Residues Asp-242, Gly-243, Asp-432, and Asp-492 each coordinate Mn(2+).

The protein belongs to the PP2C family. In terms of assembly, interacts with PYL13. Mg(2+) is required as a cofactor. The cofactor is Mn(2+). As to expression, expressed in seeds.

The enzyme catalyses O-phospho-L-seryl-[protein] + H2O = L-seryl-[protein] + phosphate. It catalyses the reaction O-phospho-L-threonyl-[protein] + H2O = L-threonyl-[protein] + phosphate. Functionally, key component and repressor of the abscisic acid (ABA) signaling pathway that regulates numerous ABA responses, such as stomatal closure, seed germination and inhibition of vegetative growth. The polypeptide is Protein phosphatase 2C 7 (HAB2) (Arabidopsis thaliana (Mouse-ear cress)).